The following is a 78-amino-acid chain: Sec-independent protein translocase protein TatA (78 aa).

Residues 1–21 (MGSLSIWHWIVVLAVVLLLFG) form a helical membrane-spanning segment. The interval 43–78 (LAEDDEPAKTPAAPPEAPRPLPHQTSSAAEAEKKPV) is disordered. Over residues 54 to 63 (AAPPEAPRPL) the composition is skewed to pro residues.

Belongs to the TatA/E family. In terms of assembly, the Tat system comprises two distinct complexes: a TatABC complex, containing multiple copies of TatA, TatB and TatC subunits, and a separate TatA complex, containing only TatA subunits. Substrates initially bind to the TatABC complex, which probably triggers association of the separate TatA complex to form the active translocon.

It is found in the cell inner membrane. Part of the twin-arginine translocation (Tat) system that transports large folded proteins containing a characteristic twin-arginine motif in their signal peptide across membranes. TatA could form the protein-conducting channel of the Tat system. This Xanthobacter autotrophicus (strain ATCC BAA-1158 / Py2) protein is Sec-independent protein translocase protein TatA.